A 139-amino-acid polypeptide reads, in one-letter code: Large ribosomal subunit protein uL16 (139 aa).

Belongs to the universal ribosomal protein uL16 family. In terms of assembly, part of the 50S ribosomal subunit.

Its function is as follows. Binds 23S rRNA and is also seen to make contacts with the A and possibly P site tRNAs. The protein is Large ribosomal subunit protein uL16 of Chlorobium phaeobacteroides (strain DSM 266 / SMG 266 / 2430).